Here is a 317-residue protein sequence, read N- to C-terminus: Acetylglutamate kinase (317 aa).

Residues Gly-70–Gly-71, Arg-92, and Asn-191 each bind substrate.

The protein belongs to the acetylglutamate kinase family. ArgB subfamily.

The protein localises to the cytoplasm. It catalyses the reaction N-acetyl-L-glutamate + ATP = N-acetyl-L-glutamyl 5-phosphate + ADP. Its pathway is amino-acid biosynthesis; L-arginine biosynthesis; N(2)-acetyl-L-ornithine from L-glutamate: step 2/4. Catalyzes the ATP-dependent phosphorylation of N-acetyl-L-glutamate. This chain is Acetylglutamate kinase, found in Corynebacterium glutamicum (strain R).